A 477-amino-acid chain; its full sequence is Cysteine--tRNA ligase (477 aa).

C28 contacts Zn(2+). Positions 30-40 match the 'HIGH' region motif; it reads PTVYDYAHIGN. 3 residues coordinate Zn(2+): C213, H238, and E242. Residues 270–274 carry the 'KMSKS' region motif; that stretch reads KMSKS. K273 is an ATP binding site.

The protein belongs to the class-I aminoacyl-tRNA synthetase family. Monomer. Requires Zn(2+) as cofactor.

It localises to the cytoplasm. It catalyses the reaction tRNA(Cys) + L-cysteine + ATP = L-cysteinyl-tRNA(Cys) + AMP + diphosphate. The chain is Cysteine--tRNA ligase (cysS) from Chlamydia trachomatis serovar D (strain ATCC VR-885 / DSM 19411 / UW-3/Cx).